The chain runs to 258 residues: D-beta-hydroxybutyrate dehydrogenase (258 aa).

6–30 serves as a coordination point for NAD(+); the sequence is VITGSTSGIGLAIARTLAKAGANIV. Substrate is bound at residue Ser-140. Catalysis depends on Tyr-153, which acts as the Proton acceptor.

The protein belongs to the short-chain dehydrogenases/reductases (SDR) family.

It carries out the reaction (R)-3-hydroxybutanoate + NAD(+) = acetoacetate + NADH + H(+). In Rhizobium meliloti (strain 1021) (Ensifer meliloti), this protein is D-beta-hydroxybutyrate dehydrogenase (bdhA).